Reading from the N-terminus, the 365-residue chain is DNA repair protein rhp51 (365 aa).

The tract at residues 1 to 25 (MADTEVEMQVSAADTNNNENGQAQS) is disordered. Over residues 12-25 (AADTNNNENGQAQS) the composition is skewed to polar residues. 149–156 (GEFRTGKS) contributes to the ATP binding site.

This sequence belongs to the RecA family. RAD51 subfamily. Interacts with rad22, rad54, rdh54, rhp54, rti1, swi2 and swi5. Forms homooiligomers.

The protein resides in the nucleus. In terms of biological role, required both for recombination and for the repair of DNA damage caused by X-rays. Binds to single and double-stranded DNA, in the presence of magnesium, and exhibits DNA-dependent ATPase activity. Promotes DNA strand annealing and strand exchange via DNA recombinase activity and forms helical nucleoprotein filaments. The protein is DNA repair protein rhp51 (rhp51) of Schizosaccharomyces pombe (strain 972 / ATCC 24843) (Fission yeast).